The sequence spans 202 residues: 3-isopropylmalate dehydratase small subunit (202 aa).

Belongs to the LeuD family. LeuD type 1 subfamily. As to quaternary structure, heterodimer of LeuC and LeuD.

It catalyses the reaction (2R,3S)-3-isopropylmalate = (2S)-2-isopropylmalate. It participates in amino-acid biosynthesis; L-leucine biosynthesis; L-leucine from 3-methyl-2-oxobutanoate: step 2/4. In terms of biological role, catalyzes the isomerization between 2-isopropylmalate and 3-isopropylmalate, via the formation of 2-isopropylmaleate. In Rhizobium johnstonii (strain DSM 114642 / LMG 32736 / 3841) (Rhizobium leguminosarum bv. viciae), this protein is 3-isopropylmalate dehydratase small subunit.